The primary structure comprises 124 residues: Trophoblast-specific protein alpha (124 aa).

Positions 1–18 are cleaved as a signal peptide; it reads MTPTIFLVILCLGVASAV. 2 disordered regions span residues 51–74 and 91–124; these read KLHS…SGQL and FEEE…NQPQ. The span at 62 to 74 shows a compositional bias: polar residues; sequence EGSNIEMSASGQL. Over residues 103-112 the composition is skewed to acidic residues; sequence DDPEFEDYTE.

The protein resides in the secreted. The protein localises to the extracellular space. Its function is as follows. It may be a growth factor/hormone, perhaps involved in interaction between the maternal and fetal systems in maintenance of pregnancy. The chain is Trophoblast-specific protein alpha (Tpbpa) from Mus musculus (Mouse).